Here is a 442-residue protein sequence, read N- to C-terminus: 5-methylthioadenosine/S-adenosylhomocysteine deaminase (442 aa).

2 residues coordinate Zn(2+): His70 and His72. Residues Glu99 and His191 each contribute to the substrate site. His218 serves as a coordination point for Zn(2+). Residues Glu221 and Asp306 each coordinate substrate. Asp306 lines the Zn(2+) pocket.

It belongs to the metallo-dependent hydrolases superfamily. MTA/SAH deaminase family. Zn(2+) is required as a cofactor.

It catalyses the reaction S-adenosyl-L-homocysteine + H2O + H(+) = S-inosyl-L-homocysteine + NH4(+). It carries out the reaction S-methyl-5'-thioadenosine + H2O + H(+) = S-methyl-5'-thioinosine + NH4(+). Catalyzes the deamination of 5-methylthioadenosine and S-adenosyl-L-homocysteine into 5-methylthioinosine and S-inosyl-L-homocysteine, respectively. Is also able to deaminate adenosine. This is 5-methylthioadenosine/S-adenosylhomocysteine deaminase from Nitratidesulfovibrio vulgaris (strain ATCC 29579 / DSM 644 / CCUG 34227 / NCIMB 8303 / VKM B-1760 / Hildenborough) (Desulfovibrio vulgaris).